Consider the following 154-residue polypeptide: 6,7-dimethyl-8-ribityllumazine synthase (154 aa).

5-amino-6-(D-ribitylamino)uracil contacts are provided by residues phenylalanine 21, alanine 55–glutamate 57, and cysteine 79–isoleucine 81. Alanine 84 to threonine 85 provides a ligand contact to (2S)-2-hydroxy-3-oxobutyl phosphate. Histidine 87 serves as the catalytic Proton donor. 5-amino-6-(D-ribitylamino)uracil is bound at residue phenylalanine 112. Arginine 126 contacts (2S)-2-hydroxy-3-oxobutyl phosphate.

This sequence belongs to the DMRL synthase family. As to quaternary structure, forms an icosahedral capsid composed of 60 subunits, arranged as a dodecamer of pentamers.

It carries out the reaction (2S)-2-hydroxy-3-oxobutyl phosphate + 5-amino-6-(D-ribitylamino)uracil = 6,7-dimethyl-8-(1-D-ribityl)lumazine + phosphate + 2 H2O + H(+). It functions in the pathway cofactor biosynthesis; riboflavin biosynthesis; riboflavin from 2-hydroxy-3-oxobutyl phosphate and 5-amino-6-(D-ribitylamino)uracil: step 1/2. In terms of biological role, catalyzes the formation of 6,7-dimethyl-8-ribityllumazine by condensation of 5-amino-6-(D-ribitylamino)uracil with 3,4-dihydroxy-2-butanone 4-phosphate. This is the penultimate step in the biosynthesis of riboflavin. The protein is 6,7-dimethyl-8-ribityllumazine synthase of Staphylococcus aureus (strain Mu50 / ATCC 700699).